Consider the following 373-residue polypeptide: Histidinol-phosphate aminotransferase (373 aa).

Lys-229 carries the N6-(pyridoxal phosphate)lysine modification.

It belongs to the class-II pyridoxal-phosphate-dependent aminotransferase family. Histidinol-phosphate aminotransferase subfamily. Pyridoxal 5'-phosphate is required as a cofactor.

It carries out the reaction L-histidinol phosphate + 2-oxoglutarate = 3-(imidazol-4-yl)-2-oxopropyl phosphate + L-glutamate. It participates in amino-acid biosynthesis; L-histidine biosynthesis; L-histidine from 5-phospho-alpha-D-ribose 1-diphosphate: step 7/9. This is Histidinol-phosphate aminotransferase (hisC) from Methanothermobacter thermautotrophicus (strain ATCC 29096 / DSM 1053 / JCM 10044 / NBRC 100330 / Delta H) (Methanobacterium thermoautotrophicum).